Consider the following 398-residue polypeptide: Enoyl-[acyl-carrier-protein] reductase [NADH] (398 aa).

Residues 48–53 (GASTGY), 74–75 (FE), 111–112 (DA), and 139–140 (LA) contribute to the NAD(+) site. Tyr225 is a substrate binding site. Tyr235 acts as the Proton donor in catalysis. Residues Lys244 and 273 to 275 (VVT) each bind NAD(+).

The protein belongs to the TER reductase family. Monomer.

The catalysed reaction is a 2,3-saturated acyl-[ACP] + NAD(+) = a (2E)-enoyl-[ACP] + NADH + H(+). It participates in lipid metabolism; fatty acid biosynthesis. In terms of biological role, involved in the final reduction of the elongation cycle of fatty acid synthesis (FAS II). Catalyzes the reduction of a carbon-carbon double bond in an enoyl moiety that is covalently linked to an acyl carrier protein (ACP). This Pseudomonas fluorescens (strain ATCC BAA-477 / NRRL B-23932 / Pf-5) protein is Enoyl-[acyl-carrier-protein] reductase [NADH].